The primary structure comprises 154 residues: Large ribosomal subunit protein uL24 (154 aa).

The interval 97 to 154 (EIAARKNLPPPEVPEETSNDTKESDENVTGADKEETNEIKEEDLNDNEDKNNDGSQEA) is disordered. Residues 115–135 (NDTKESDENVTGADKEETNEI) show a composition bias toward basic and acidic residues.

It belongs to the universal ribosomal protein uL24 family. In terms of assembly, part of the 50S ribosomal subunit.

One of two assembly initiator proteins, it binds directly to the 5'-end of the 23S rRNA, where it nucleates assembly of the 50S subunit. Functionally, located at the polypeptide exit tunnel on the outside of the subunit. The sequence is that of Large ribosomal subunit protein uL24 from Picrophilus torridus (strain ATCC 700027 / DSM 9790 / JCM 10055 / NBRC 100828 / KAW 2/3).